The primary structure comprises 560 residues: Formate--tetrahydrofolate ligase (560 aa).

Thr69–Ser76 is a binding site for ATP.

Belongs to the formate--tetrahydrofolate ligase family.

The enzyme catalyses (6S)-5,6,7,8-tetrahydrofolate + formate + ATP = (6R)-10-formyltetrahydrofolate + ADP + phosphate. It functions in the pathway one-carbon metabolism; tetrahydrofolate interconversion. In Listeria monocytogenes serotype 4b (strain CLIP80459), this protein is Formate--tetrahydrofolate ligase.